The primary structure comprises 861 residues: Probable alpha,alpha-trehalose-phosphate synthase [UDP-forming] 10 (861 aa).

A Phosphoserine modification is found at Ser5. At Thr32 the chain carries Phosphothreonine. The segment at 59–546 (ERKIIVANFL…ARSFSQDLER (488 aa)) is glycosyltransferase.

This sequence in the N-terminal section; belongs to the glycosyltransferase 20 family. The protein in the C-terminal section; belongs to the trehalose phosphatase family.

It catalyses the reaction D-glucose 6-phosphate + UDP-alpha-D-glucose = alpha,alpha-trehalose 6-phosphate + UDP + H(+). In Arabidopsis thaliana (Mouse-ear cress), this protein is Probable alpha,alpha-trehalose-phosphate synthase [UDP-forming] 10 (TPS10).